A 124-amino-acid polypeptide reads, in one-letter code: MIKDRFLQLIQLLISLFLIMGALGIGITIQKFTGVSVPGSVIGMLVLFFSMTLGLVKVDWVKPGATLFIRYMILLFVPISVGLMQHFDMLLANALPIIASAVGGSLIVLVSLAWLLDYLLKEKH.

A run of 4 helical transmembrane segments spans residues 9–29 (LIQL…GITI), 35–55 (VSVP…TLGL), 72–92 (MILL…MLLA), and 95–115 (LPII…LAWL).

It belongs to the UPF0299 family.

Its subcellular location is the cell inner membrane. This is UPF0299 membrane protein VP1300 from Vibrio parahaemolyticus serotype O3:K6 (strain RIMD 2210633).